We begin with the raw amino-acid sequence, 340 residues long: NADH-quinone oxidoreductase subunit H (340 aa).

8 helical membrane-spanning segments follow: residues 4 to 24 (TIGI…PLLI), 78 to 98 (YLFV…WAVI), 113 to 133 (VLYL…AGWA), 151 to 171 (VSYE…AGSM), 184 to 204 (MLHW…ISGI), 244 to 264 (SMIL…LSPF), 273 to 293 (IFFI…FLFV), and 316 to 336 (VLIP…VAHV).

This sequence belongs to the complex I subunit 1 family. In terms of assembly, NDH-1 is composed of 14 different subunits. Subunits NuoA, H, J, K, L, M, N constitute the membrane sector of the complex.

The protein resides in the cell inner membrane. The enzyme catalyses a quinone + NADH + 5 H(+)(in) = a quinol + NAD(+) + 4 H(+)(out). Its function is as follows. NDH-1 shuttles electrons from NADH, via FMN and iron-sulfur (Fe-S) centers, to quinones in the respiratory chain. The immediate electron acceptor for the enzyme in this species is believed to be ubiquinone. Couples the redox reaction to proton translocation (for every two electrons transferred, four hydrogen ions are translocated across the cytoplasmic membrane), and thus conserves the redox energy in a proton gradient. This subunit may bind ubiquinone. The chain is NADH-quinone oxidoreductase subunit H from Legionella pneumophila (strain Lens).